Reading from the N-terminus, the 238-residue chain is Ribose-5-phosphate isomerase A (238 aa).

Residues 30-33 (SGST), 87-90 (DGAD), and 100-103 (KGGG) contribute to the substrate site. Residue Glu-109 is the Proton acceptor of the active site. Residue Lys-127 participates in substrate binding.

It belongs to the ribose 5-phosphate isomerase family. In terms of assembly, homodimer.

The catalysed reaction is aldehydo-D-ribose 5-phosphate = D-ribulose 5-phosphate. The protein operates within carbohydrate degradation; pentose phosphate pathway; D-ribose 5-phosphate from D-ribulose 5-phosphate (non-oxidative stage): step 1/1. Its function is as follows. Catalyzes the reversible conversion of ribose-5-phosphate to ribulose 5-phosphate. In Synechococcus sp. (strain WH7803), this protein is Ribose-5-phosphate isomerase A.